A 489-amino-acid polypeptide reads, in one-letter code: Aerolysin (489 aa).

Residues 1-24 (MMNRIITANLANLASSLMLAQVLG) form the signal peptide. Disulfide bonds link Cys44–Cys100 and Cys184–Cys189. The segment at 70–86 (WQITGLADRWVIMGPGY) is interaction with host N-linked glycan. A part of the transmembrane beta-barrel after proteolytic activation of the toxin and insertion into the host membrane region spans residues 257–289 (YSLSEKVTTKNKFQWPLVGETELAIEIAASQSW). The interaction with glycans from host GPI-anchor stretch occupies residues 347–356 (RWGGNAWYTH). A propeptide spanning residues 445 to 489 (TRSAKAAQLRSASAEEVALTSVDLDSEALANEGFGNVSLTIVPVQ) is cleaved from the precursor.

The protein belongs to the aerolysin family. As to quaternary structure, homodimer in solution; homoheptamer in the host membrane. After binding to GPI-anchored proteins in target membranes and proteolytic removal of the C-terminal propeptide, the protein assembles into a heptameric pre-pore complex. A further conformation change leads to insertion into the host membrane. Post-translationally, proteolytic cleavage and subsequent release of the propeptide trigger a major conformation change, leading to the formation of a heptameric pre-pore that then inserts into the host membrane.

It is found in the secreted. Its subcellular location is the host cell membrane. Functionally, secreted, cytolytic toxin that forms pores in host membranes after proteolytic removal of a C-terminal propeptide, leading to destruction of the membrane permeability barrier and cell death. The pores are formed by transmembrane beta-strands and are approximately 3 nm in diameter. The sequence is that of Aerolysin (ash3) from Aeromonas salmonicida.